The chain runs to 192 residues: NADH-quinone oxidoreductase subunit B 1 (192 aa).

Residues cysteine 71, cysteine 72, cysteine 136, and cysteine 166 each contribute to the [4Fe-4S] cluster site.

Belongs to the complex I 20 kDa subunit family. In terms of assembly, NDH-1 is composed of 14 different subunits. Subunits NuoB, C, D, E, F, and G constitute the peripheral sector of the complex. [4Fe-4S] cluster is required as a cofactor.

The protein localises to the cell inner membrane. It catalyses the reaction a quinone + NADH + 5 H(+)(in) = a quinol + NAD(+) + 4 H(+)(out). Functionally, NDH-1 shuttles electrons from NADH, via FMN and iron-sulfur (Fe-S) centers, to quinones in the respiratory chain. The immediate electron acceptor for the enzyme in this species is believed to be ubiquinone. Couples the redox reaction to proton translocation (for every two electrons transferred, four hydrogen ions are translocated across the cytoplasmic membrane), and thus conserves the redox energy in a proton gradient. This chain is NADH-quinone oxidoreductase subunit B 1, found in Rhizobium meliloti (strain 1021) (Ensifer meliloti).